A 209-amino-acid polypeptide reads, in one-letter code: Regulator of G-protein signaling 1 (209 aa).

Residues 18 to 42 (FFSASPKDSKEPSHSLLDDNKQKKR) form a disordered region. The segment covering 24–38 (KDSKEPSHSLLDDNK) has biased composition (basic and acidic residues). Residues 85 to 200 (SLEKLLANQM…LKSNIYLNLL (116 aa)) form the RGS domain.

As to quaternary structure, interacts with GNAI1 and GNAQ. In terms of tissue distribution, expressed in multiple tissues.

Its subcellular location is the cell membrane. It localises to the cytoplasm. It is found in the cytosol. Its function is as follows. Regulates G protein-coupled receptor signaling cascades, including signaling downstream of the N-formylpeptide chemoattractant receptors and leukotriene receptors. Inhibits B cell chemotaxis toward CXCL12. Inhibits signal transduction by increasing the GTPase activity of G protein alpha subunits, thereby driving them into their inactive GDP-bound form. The polypeptide is Regulator of G-protein signaling 1 (Rgs1) (Rattus norvegicus (Rat)).